The following is a 216-amino-acid chain: Uracil phosphoribosyltransferase (216 aa).

Residues Arg85, Arg110, and 135-143 (DPMVATGYS) each bind 5-phospho-alpha-D-ribose 1-diphosphate. Uracil-binding positions include Ile200 and 205–207 (GDA). Asp206 provides a ligand contact to 5-phospho-alpha-D-ribose 1-diphosphate.

Belongs to the UPRTase family. Mg(2+) serves as cofactor.

It catalyses the reaction UMP + diphosphate = 5-phospho-alpha-D-ribose 1-diphosphate + uracil. It participates in pyrimidine metabolism; UMP biosynthesis via salvage pathway; UMP from uracil: step 1/1. Its activity is regulated as follows. Allosterically activated by GTP. In terms of biological role, catalyzes the conversion of uracil and 5-phospho-alpha-D-ribose 1-diphosphate (PRPP) to UMP and diphosphate. The chain is Uracil phosphoribosyltransferase from Burkholderia mallei (strain NCTC 10247).